Consider the following 585-residue polypeptide: Lipoprotein LpqB (585 aa).

Positions 1 to 17 (MGRKLLGLLMLAVLLAG) are cleaved as a signal peptide. Cys-18 is lipidated: N-palmitoyl cysteine. Residue Cys-18 is the site of S-diacylglycerol cysteine attachment. Disordered stretches follow at residues 24-48 (SSAP…TPGM) and 560-585 (PSAD…VLPG).

This sequence belongs to the LpqB lipoprotein family.

It is found in the cell membrane. This is Lipoprotein LpqB from Mycolicibacterium paratuberculosis (strain ATCC BAA-968 / K-10) (Mycobacterium paratuberculosis).